Consider the following 204-residue polypeptide: Acyl-homoserine-lactone synthase (204 aa).

The protein belongs to the autoinducer synthase family.

It carries out the reaction a fatty acyl-[ACP] + S-adenosyl-L-methionine = an N-acyl-L-homoserine lactone + S-methyl-5'-thioadenosine + holo-[ACP] + H(+). In terms of biological role, required for the synthesis of acyl-HSL autoinducers that bind to SolR. This Ralstonia nicotianae (strain ATCC BAA-1114 / GMI1000) (Ralstonia solanacearum) protein is Acyl-homoserine-lactone synthase (solI).